The primary structure comprises 117 residues: Large ribosomal subunit protein bL19 (117 aa).

This sequence belongs to the bacterial ribosomal protein bL19 family.

Functionally, this protein is located at the 30S-50S ribosomal subunit interface and may play a role in the structure and function of the aminoacyl-tRNA binding site. This chain is Large ribosomal subunit protein bL19, found in Vibrio parahaemolyticus serotype O3:K6 (strain RIMD 2210633).